We begin with the raw amino-acid sequence, 381 residues long: Transaldolase 2 (381 aa).

Residue Lys141 is the Schiff-base intermediate with substrate of the active site.

The protein belongs to the transaldolase family. Type 2 subfamily.

The protein localises to the cytoplasm. It catalyses the reaction D-sedoheptulose 7-phosphate + D-glyceraldehyde 3-phosphate = D-erythrose 4-phosphate + beta-D-fructose 6-phosphate. It participates in carbohydrate degradation; pentose phosphate pathway; D-glyceraldehyde 3-phosphate and beta-D-fructose 6-phosphate from D-ribose 5-phosphate and D-xylulose 5-phosphate (non-oxidative stage): step 2/3. Transaldolase is important for the balance of metabolites in the pentose-phosphate pathway. This is Transaldolase 2 (tal2) from Nostoc punctiforme (strain ATCC 29133 / PCC 73102).